Here is a 244-residue protein sequence, read N- to C-terminus: 5-oxoprolinase subunit A (244 aa).

It belongs to the LamB/PxpA family. As to quaternary structure, forms a complex composed of PxpA, PxpB and PxpC.

The enzyme catalyses 5-oxo-L-proline + ATP + 2 H2O = L-glutamate + ADP + phosphate + H(+). Functionally, catalyzes the cleavage of 5-oxoproline to form L-glutamate coupled to the hydrolysis of ATP to ADP and inorganic phosphate. This chain is 5-oxoprolinase subunit A, found in Shigella flexneri serotype 5b (strain 8401).